The primary structure comprises 426 residues: 6-Hydroxy-7-prenyldeoxybrevianamide E synthase notC' (426 aa).

Position 94 (Glu-94) interacts with substrate. Positions 105, 191, and 193 each coordinate dimethylallyl diphosphate. Tyr-195 contacts substrate. Residues Lys-267, Tyr-269, Gln-352, Tyr-354, Tyr-418, and Tyr-422 each coordinate dimethylallyl diphosphate.

Belongs to the tryptophan dimethylallyltransferase family.

The enzyme catalyses 6-hydroxydeoxybrevianamide E + dimethylallyl diphosphate = notoamide S + diphosphate. It participates in alkaloid biosynthesis. Prenyltransferase; part of the gene cluster that mediates the biosynthesis of notoamide, a fungal indole alkaloid that belongs to a family of natural products containing a characteristic bicyclo[2.2.2]diazaoctane core. The first step of notoamide biosynthesis involves coupling of L-proline and L-tryptophan by the bimodular NRPS notE', to produce cyclo-L-tryptophan-L-proline called brevianamide F. The reverse prenyltransferase notF' then acts as a deoxybrevianamide E synthase and converts brevianamide F to deoxybrevianamide E via reverse prenylation at C-2 of the indole ring leading to the bicyclo[2.2.2]diazaoctane core. Deoxybrevianamide E is further hydroxylated at C-6 of the indole ring, likely catalyzed by the cytochrome P450 monooxygenase notG', to yield 6-hydroxy-deoxybrevianamide E. 6-hydroxy-deoxybrevianamide E is a specific substrate of the prenyltransferase notC' for normal prenylation at C-7 to produce 6-hydroxy-7-prenyl-deoxybrevianamide, also called notoamide S. As the proposed pivotal branching point in notoamide biosynthesis, notoamide S can be diverted to notoamide E through an oxidative pyran ring closure putatively catalyzed by either notH' cytochrome P450 monooxygenase or the notD' FAD-linked oxidoreductase. This step would be followed by an indole 2,3-epoxidation-initiated pinacol-like rearrangement catalyzed by the notB' FAD-dependent monooxygenase leading to the formation of notoamide C and notoamide D. On the other hand notoamide S is converted to notoamide T by notH' (or notD'), a bifunctional oxidase that also functions as the intramolecular Diels-Alderase responsible for generation of (-)-notoamide T. To generate antipodal (+)-notoaminide T, notH (or notD) in Aspergillus strain MF297-2 is expected to catalyze a Diels-Alder reaction leading to the opposite stereochemistry. The remaining oxidoreductase notD' (or notH') likely catalyzes the oxidative pyran ring formation to yield (-)-stephacidin A. The FAD-dependent monooxygenase notI' is highly similar to notB' and is predicted to catalyze a similar conversion from (-)-stephacidin A to (+)-notoamide B via the 2,3-epoxidation of (-)-stephacidin A followed by a pinacol-type rearrangement. Finally, it remains unclear which enzyme could be responsible for the final hydroxylation steps leading to notoamide A and sclerotiamide. The sequence is that of 6-Hydroxy-7-prenyldeoxybrevianamide E synthase notC' from Aspergillus versicolor.